Consider the following 605-residue polypeptide: MAPSSPEVSRIRNFCIIAHIDHGKSTLADRLLEMTHTLDRTQMDSAQVLDDMDLERERGITIKSHAVQMKYCSVAGDDYTLNLIDTPGHVDFSYEVSRSLAACEGALLVVDATQGVEAQTIANLYLAIEAGLEIIPVINKIDLPSSDVEGVASQIIDLIGIEREEILQVSAKAGLGVPELMEAIIARVPSPADNGHLPLRALIFDSVFDAYRGAVVYLRIVDGVLRKGDRVRFFANNKVFLADEIGTMSMKRQPKQVLEAGDVGYLICSIKDVKDAKVGDTVTHADAPADKRLAGYKDVKPMVFSGLYPVNSNEFEDLRESLEKLSLNDASLVYTPETSVALGFGFRCGFLGLLHMEIIQERLEREYNMNIITTVPNVEYRVLMTNGETVIVDNPSKMPDTARITNVEEPYVSMQIITLADYIGNIMKLGMERRGEYRNTDYLDTKRVCMHFEFPLSEIVFDFHDRLKSISKGYASMDYEYIGYRESELVKLDVLLNGEPVDALSIIVHRSKAYDWGRKLCGKLKGIIPKQMYEVAIQAAIGSRIISRETISAMRKNVLAKCYGGDISRKRKLIEKQKEGKKRMKQVGRVEVPQEAFLAILNIDE.

A tr-type G domain is found at 9-192 (SRIRNFCIIA…AIIARVPSPA (184 aa)). Residues 21 to 26 (DHGKST) and 139 to 142 (NKID) each bind GTP.

This sequence belongs to the TRAFAC class translation factor GTPase superfamily. Classic translation factor GTPase family. LepA subfamily.

The protein localises to the cell inner membrane. It catalyses the reaction GTP + H2O = GDP + phosphate + H(+). Its function is as follows. Required for accurate and efficient protein synthesis under certain stress conditions. May act as a fidelity factor of the translation reaction, by catalyzing a one-codon backward translocation of tRNAs on improperly translocated ribosomes. Back-translocation proceeds from a post-translocation (POST) complex to a pre-translocation (PRE) complex, thus giving elongation factor G a second chance to translocate the tRNAs correctly. Binds to ribosomes in a GTP-dependent manner. The sequence is that of Elongation factor 4 from Chlorobium phaeovibrioides (strain DSM 265 / 1930) (Prosthecochloris vibrioformis (strain DSM 265)).